The chain runs to 432 residues: C2H2 type master regulator of conidiophore development brlA (432 aa).

Disordered stretches follow at residues 22–72 (SNEC…RTPG) and 238–260 (KQHSPTTPIRSCSLGTGSGADTP). The segment covering 29–44 (TSSFSPLESPTPTPTS) has biased composition (low complexity). Polar residues-rich tracts occupy residues 62–72 (LPNNTYERTPG) and 238–252 (KQHSPTTPIRSCSLG). 2 consecutive C2H2-type zinc fingers follow at residues 320-344 (FKCKEPGCNGRFKRQEHLKRHMKSH) and 350-375 (HVCWVPGCHRAFSRSDNLNAHYTKTH). Residues 388-432 (LDENSPDYDPEFRGQLTPDGRPIYGSKLDDPIPGAGDMSLDGWDE) form a disordered region.

Its subcellular location is the nucleus. In terms of biological role, brlA, abaA and wetA are pivotal regulators of conidiophore development and conidium maturation. They act individually and together to regulate their own expression and that of numerous other sporulation-specific genes. Binds promoters of target genes at brlA response elements (BREs) containing the conserved sequence 5'-(C/A)(A/G)AGGG(G/A)-3'. Controls the expression of the conidiophore-specific phenol oxidase ivoB. Controls the expression of the hydrophobin rodA. Mediates the developmental switch from the indeterminate, apical growth pattern of vegetative cells to the budding growth pattern of conidiophores. Expression of brlA leads to activation of abaA, wetA and stuA, cessation of vegetative growth, cellular vacuolization and spore formation. The protein is C2H2 type master regulator of conidiophore development brlA of Emericella nidulans (strain FGSC A4 / ATCC 38163 / CBS 112.46 / NRRL 194 / M139) (Aspergillus nidulans).